Reading from the N-terminus, the 179-residue chain is Large ribosomal subunit protein uL22c (179 aa).

This sequence belongs to the universal ribosomal protein uL22 family. As to quaternary structure, part of the 50S ribosomal subunit.

Its subcellular location is the plastid. The protein localises to the chloroplast. Its function is as follows. This protein binds specifically to 23S rRNA. In terms of biological role, the globular domain of the protein is located near the polypeptide exit tunnel on the outside of the subunit, while an extended beta-hairpin is found that lines the wall of the exit tunnel in the center of the 70S ribosome. This chain is Large ribosomal subunit protein uL22c (rpl22), found in Ranunculus macranthus (Large buttercup).